The following is a 333-amino-acid chain: Holliday junction branch migration complex subunit RuvB (333 aa).

Positions 1-182 (MDERLLSGES…FGVLSRLEYY (182 aa)) are large ATPase domain (RuvB-L). ATP contacts are provided by residues Leu-21, Arg-22, Gly-63, Lys-66, Thr-67, Thr-68, 129 to 131 (EDF), Arg-172, Tyr-182, and Arg-219. Thr-67 provides a ligand contact to Mg(2+). The small ATPAse domain (RuvB-S) stretch occupies residues 183–253 (TVDQLSAIVE…ITQMALELLQ (71 aa)). The head domain (RuvB-H) stretch occupies residues 256–333 (KLGLDHIDHK…EHFGMEMPKV (78 aa)). The DNA site is built by Arg-311 and Arg-316.

Belongs to the RuvB family. As to quaternary structure, homohexamer. Forms an RuvA(8)-RuvB(12)-Holliday junction (HJ) complex. HJ DNA is sandwiched between 2 RuvA tetramers; dsDNA enters through RuvA and exits via RuvB. An RuvB hexamer assembles on each DNA strand where it exits the tetramer. Each RuvB hexamer is contacted by two RuvA subunits (via domain III) on 2 adjacent RuvB subunits; this complex drives branch migration. In the full resolvosome a probable DNA-RuvA(4)-RuvB(12)-RuvC(2) complex forms which resolves the HJ.

Its subcellular location is the cytoplasm. It catalyses the reaction ATP + H2O = ADP + phosphate + H(+). In terms of biological role, the RuvA-RuvB-RuvC complex processes Holliday junction (HJ) DNA during genetic recombination and DNA repair, while the RuvA-RuvB complex plays an important role in the rescue of blocked DNA replication forks via replication fork reversal (RFR). RuvA specifically binds to HJ cruciform DNA, conferring on it an open structure. The RuvB hexamer acts as an ATP-dependent pump, pulling dsDNA into and through the RuvAB complex. RuvB forms 2 homohexamers on either side of HJ DNA bound by 1 or 2 RuvA tetramers; 4 subunits per hexamer contact DNA at a time. Coordinated motions by a converter formed by DNA-disengaged RuvB subunits stimulates ATP hydrolysis and nucleotide exchange. Immobilization of the converter enables RuvB to convert the ATP-contained energy into a lever motion, pulling 2 nucleotides of DNA out of the RuvA tetramer per ATP hydrolyzed, thus driving DNA branch migration. The RuvB motors rotate together with the DNA substrate, which together with the progressing nucleotide cycle form the mechanistic basis for DNA recombination by continuous HJ branch migration. Branch migration allows RuvC to scan DNA until it finds its consensus sequence, where it cleaves and resolves cruciform DNA. In Bacillus cereus (strain 03BB102), this protein is Holliday junction branch migration complex subunit RuvB.